Consider the following 441-residue polypeptide: Chromosomal replication initiator protein DnaA (441 aa).

The tract at residues 1–80 (MQNDVLARWE…MHQEISLQFI (80 aa)) is domain I, interacts with DnaA modulators. The tract at residues 80 to 102 (ILAGQEVDQPKPKERSSEETYIN) is domain II. The domain III, AAA+ region stretch occupies residues 103–320 (ILNPRYTFDT…GALIRVSAFS (218 aa)). Residues Gly-147, Gly-149, Lys-150, and Thr-151 each contribute to the ATP site. The domain IV, binds dsDNA stretch occupies residues 321–441 (SLEQRDATPQ…IKELKKRIGE (121 aa)).

The protein belongs to the DnaA family. In terms of assembly, oligomerizes as a right-handed, spiral filament on DNA at oriC.

Its subcellular location is the cytoplasm. Plays an essential role in the initiation and regulation of chromosomal replication. ATP-DnaA binds to the origin of replication (oriC) to initiate formation of the DNA replication initiation complex once per cell cycle. Binds the DnaA box (a 9 base pair repeat at the origin) and separates the double-stranded (ds)DNA. Forms a right-handed helical filament on oriC DNA; dsDNA binds to the exterior of the filament while single-stranded (ss)DNA is stabiized in the filament's interior. The ATP-DnaA-oriC complex binds and stabilizes one strand of the AT-rich DNA unwinding element (DUE), permitting loading of DNA polymerase. After initiation quickly degrades to an ADP-DnaA complex that is not apt for DNA replication. Binds acidic phospholipids. This Desulforamulus reducens (strain ATCC BAA-1160 / DSM 100696 / MI-1) (Desulfotomaculum reducens) protein is Chromosomal replication initiator protein DnaA.